Consider the following 284-residue polypeptide: Bifunctional protein FolD (284 aa).

NADP(+) contacts are provided by residues 165–167 (GAS), serine 190, and isoleucine 231.

Belongs to the tetrahydrofolate dehydrogenase/cyclohydrolase family. Homodimer.

The enzyme catalyses (6R)-5,10-methylene-5,6,7,8-tetrahydrofolate + NADP(+) = (6R)-5,10-methenyltetrahydrofolate + NADPH. It carries out the reaction (6R)-5,10-methenyltetrahydrofolate + H2O = (6R)-10-formyltetrahydrofolate + H(+). It participates in one-carbon metabolism; tetrahydrofolate interconversion. Functionally, catalyzes the oxidation of 5,10-methylenetetrahydrofolate to 5,10-methenyltetrahydrofolate and then the hydrolysis of 5,10-methenyltetrahydrofolate to 10-formyltetrahydrofolate. This chain is Bifunctional protein FolD, found in Bordetella avium (strain 197N).